Reading from the N-terminus, the 636-residue chain is Molybdenum cofactor biosynthesis protein 1 (636 aa).

The segment at 1–383 is molybdenum cofactor biosynthesis protein A; that stretch reads MAARPAFGIV…QMKNRPMILI (383 aa). Positions 19 to 40 are disordered; that stretch reads RGCSSGAPVTQPRPGEPSRPTR. At S64 the chain carries Phosphoserine. Positions 64 to 279 constitute a Radical SAM core domain; that stretch reads SFGRQHSYLR…TIRQRWPGLE (216 aa). R73 contacts GTP. The [4Fe-4S] cluster site is built by C80 and C84. Y86 contributes to the S-adenosyl-L-methionine binding site. C87 contacts [4Fe-4S] cluster. R123 serves as a coordination point for GTP. G127 contacts S-adenosyl-L-methionine. T154 serves as a coordination point for GTP. S178 lines the S-adenosyl-L-methionine pocket. At K198 the chain carries N6-acetyllysine. K215 serves as a coordination point for GTP. An S-adenosyl-L-methionine-binding site is contributed by M249. Residues C312 and C315 each coordinate [4Fe-4S] cluster. 317–319 is a binding site for GTP; it reads RLR. Residue C329 participates in [4Fe-4S] cluster binding. Residues 414–636 are molybdenum cofactor biosynthesis protein C; it reads QCLSDQMASL…GGQRGDFHRA (223 aa). A disordered region spans residues 444–484; the sequence is SPQRHYSSYPDPDTHSKCLSTGSQAPDAPSGPGPTSNQLTH. K528 carries the N6-acetyllysine modification. Catalysis depends on D606, which acts as the For molybdenum cofactor biosynthesis protein C activity.

The protein in the C-terminal section; belongs to the MoaC family. In the N-terminal section; belongs to the radical SAM superfamily. MoaA family. In terms of assembly, isoform Mocs1a and isoform Mocs1b probably form a heterooligomer. Requires [4Fe-4S] cluster as cofactor.

The enzyme catalyses GTP + AH2 + S-adenosyl-L-methionine = (8S)-3',8-cyclo-7,8-dihydroguanosine 5'-triphosphate + 5'-deoxyadenosine + L-methionine + A + H(+). It catalyses the reaction (8S)-3',8-cyclo-7,8-dihydroguanosine 5'-triphosphate = cyclic pyranopterin phosphate + diphosphate. It participates in cofactor biosynthesis; molybdopterin biosynthesis. Its function is as follows. Isoform Mocs1a and isoform Mocs1b probably form a complex that catalyzes the conversion of 5'-GTP to cyclic pyranopterin monophosphate (cPMP). Mocs1a catalyzes the cyclization of GTP to (8S)-3',8-cyclo-7,8-dihydroguanosine 5'-triphosphate and Mocs1b catalyzes the subsequent conversion of (8S)-3',8-cyclo-7,8-dihydroguanosine 5'-triphosphate to cPMP. The chain is Molybdenum cofactor biosynthesis protein 1 (Mocs1) from Mus musculus (Mouse).